Here is a 678-residue protein sequence, read N- to C-terminus: Protein CASP (678 aa).

Residues 1–619 are Cytoplasmic-facing; that stretch reads MAANVGSMSQ…LILSNKTART (619 aa). 4 coiled-coil regions span residues 16–40, 67–374, 427–454, and 502–556; these read DLQQ…ESEQ, LLKS…TLKS, HLTE…TIQS, and LSII…FLQS. Ser-586 carries the phosphoserine modification. A helical; Anchor for type IV membrane protein membrane pass occupies residues 620–640; that stretch reads IGFFYTLFLHCLVFLVLYKLA. The Lumenal portion of the chain corresponds to 641–678; sequence WSESVERDCAATCAKKFADHLHKFHESDNGAAAGDLWQ.

Belongs to the CASP family. Homodimer; disulfide-linked. Interacts with GOLGA5. As to expression, ubiquitously expressed.

It is found in the golgi apparatus membrane. Functionally, may be involved in intra-Golgi retrograde transport. The protein is Protein CASP (Cux1) of Mus musculus (Mouse).